Consider the following 862-residue polypeptide: Fork head protein homolog 2 (862 aa).

One can recognise an FHA domain in the interval 83-152 (VSIGRNTDPL…NGAKVNFQRT (70 aa)). The fork-head DNA-binding region spans 339–430 (VKPPHSYATM…QQEFLNKWNT (92 aa)). Disordered stretches follow at residues 498–528 (PSKG…QEQR), 611–663 (SDSA…GTTT), 698–730 (PERG…LQTS), and 750–846 (ESNN…ANAK). A compositionally biased stretch (low complexity) spans 504-520 (PASQQSQPPVSHQNQSQ). Residues 611 to 644 (SDSADKSTNNNGGTKMNLPAISTSSLDENGNLEP) show a composition bias toward polar residues. Residues 645–655 (TTTTSSGNSNS) are compositionally biased toward low complexity. Position 708 is a phosphoserine (S708). Residues 712–726 (SNSNNTNNNGANNSN) are compositionally biased toward low complexity. 2 stretches are compositionally biased toward polar residues: residues 750-770 (ESNN…NVKS) and 778-788 (LQFSSTNNTPA). Over residues 804 to 829 (IKAKENENATSEKDSDSNSNDLETKD) the composition is skewed to basic and acidic residues. A compositionally biased stretch (polar residues) spans 830–844 (INSSPLKNQGGSTAN). A phosphoserine mark is found at S832 and S833.

As to quaternary structure, interacts with MCM1. Interacts with NDD1. Interacts with the origin recognition complex (ORC) composed of ORC1 to ORC6.

The protein resides in the nucleus. Its subcellular location is the cytoplasm. The protein localises to the cytosol. Its function is as follows. Transcription factor that regulates the expression of the CLB2 cluster of genes during the G2/M phase of the mitotic cell cycle. The CLB2 cluster of genes includes mitotic regulators such as CLB1, CLB2, CDC5 and CDC20 as well as SWI5 and ACE2, transcription factors required for the subsequent temporal wave of cell cycle regulated gene expression in the M/G1 phase interval. Involved in HMRa silencing. FKH1 and FKH2 associate with the coding regions of active genes and influence, in opposing ways, transcriptional elongation and termination, and coordinate early transcription elongation and pre-mRNA processing. Both FKH1 and FKH2 play a role as regulators of lifespan in collaboration with the anaphase-promoting complex (APC), likely through combined regulation of stress response, genomic stability, and cell cycle regulation. FKH1 and FKH2 function also in controlling yeast cell morphology by preventing preudohyphal growth. Acts as a rate-limiting replication origin activator via its interaction with the origin recognition complex (ORC). The protein is Fork head protein homolog 2 of Saccharomyces cerevisiae (strain ATCC 204508 / S288c) (Baker's yeast).